The sequence spans 506 residues: BTB/POZ domain-containing protein At3g22104 (506 aa).

Residues 6-76 (SDLEVDINGE…CYNDGRVAVM (71 aa)) enclose the BTB domain. An NPH3 domain is found at 187–435 (TWWFDEVLVL…LDEQQQQQQQ (249 aa)). A coiled-coil region spans residues 421 to 492 (QAIETLDEQQ…MEVIKKRSKS (72 aa)). The tract at residues 485–506 (VIKKRSKSSSKGSNRSLPKLCS) is disordered.

This sequence belongs to the NPH3 family.

It participates in protein modification; protein ubiquitination. In terms of biological role, may act as a substrate-specific adapter of an E3 ubiquitin-protein ligase complex (CUL3-RBX1-BTB) which mediates the ubiquitination and subsequent proteasomal degradation of target proteins. The sequence is that of BTB/POZ domain-containing protein At3g22104 from Arabidopsis thaliana (Mouse-ear cress).